A 1122-amino-acid polypeptide reads, in one-letter code: MALSRGTSLILHEDPEKTPSPNSCEVPGIMSNTTPRPTPDLTLAPLPAHGVALAPALHPALSPDPEGVSGPVPNDISNPNASGAATPSSIQINTADTDDQSLDHTPKPNLAGTLCPDSQPVPSLSSTQATVLSPENSIKPLSEDIPKSFSSKVFGLGQSNSNPSRPEPNLYIRALSREALVRSHTISRQSSQTPLLLPSNTSLDRLHSGNISKVNLGRAQNSNEAITLTSHTIFASVSKEALSASWNTGSKGSVNVTSNSQPRSGLNVTVTHASHVSLIPGSSEGLSLHSSAQVPNSTLSPSSCMTLIMGSESLSMDSSFVVTDTSTLTLSSHRDYSEDNSIRTMPLEENLGKWDSLQGVTAFRSPPEGTSEDAKANESEKRDHDNDTALVENIISYQKNQDEVEVTGEKETTVKMMMRKIQEEPLDSLLSPARRQAMEILAQLSHTKPILSVRERVELVNTCVRSVFSLPSVQAMQEKDESKAEVIQTLYHQTLDSLQKLLNALFIEDPTPAGLKSILEPLGPWMNSGKVHERARAVNSNVSVLNYTLVTLPFFVSSGFPTLGLLLGRLLLRIGDPDEEIGREALDGITILYTILDLQKRTKNKEEINKKELYETNKRFLGPYNPASPCQNILRVIAEFGDFLGPQQVRDLLLAALEGLKDISETQGKDSIEMMQLASEVMLSSVLEWYRHRALEVIPEIMQGIYMQLSHIQEPRAREVALLPISFLASSFMTEVVVALLMCPLPLDSNGAEMWRQLILRKPSCDVRDLLDLLLTSLKEKPVTKKGRASIVPLAAASGLCELLSVNSCVGRVRRIYPQLLLALLIQVHYHIGLNLPSRVAPRKDSKDDIQPPLFVPVRWMVKVVKTLLLKMGCSYESAFLEEQGGWELMGQAESHYRAVSLLARAMVHYSCQELCRILYLLIPLLERGDERHKITATAFFVELFRMEQVRRIPEEYSLGRMVEGLSHRDPIMKVLSIRGLVILARRSEKMTKVQGLLPSMVKSLKNMDGVLVMEAVHDLKTIFKGQAKKLTDNSVYIEMLQTLLPHFIDARETVRTSCINTYGKVVKKLRMPRTQAMEEQLTSTLMPLLFIIQEGNAKVSQHFPLEFHTAGIFFLLVCRNV.

2 disordered regions span residues 1 to 144 (MALS…LSED) and 183 to 203 (SHTI…NTSL). Residues 33-65 (TTPRPTPDLTLAPLPAHGVALAPALHPALSPDP) show a composition bias toward low complexity. 3 stretches are compositionally biased toward polar residues: residues 75-95 (DISN…INTA), 120-136 (PVPS…SPEN), and 184-203 (HTIS…NTSL). 5 N-linked (GlcNAc...) asparagine glycosylation sites follow: Asn200, Asn210, Asn255, Asn267, and Asn296. The segment at 246-265 (WNTGSKGSVNVTSNSQPRSG) is disordered. Ser356 bears the Phosphoserine mark. Residues 363 to 385 (FRSPPEGTSEDAKANESEKRDHD) are disordered. A compositionally biased stretch (basic and acidic residues) spans 372–385 (EDAKANESEKRDHD). 2 N-linked (GlcNAc...) asparagine glycosylation sites follow: Asn541 and Asn546. Transmembrane regions (helical) follow at residues 548–568 (TLVT…LLLG) and 722–742 (LLPI…ALLM). HEAT repeat units follow at residues 913–950 (QELC…MEQV), 992–1029 (TKVQ…GQAK), 1035–1072 (SVYI…KLRM), and 1080–1117 (EQLT…FFLL).

It is found in the membrane. This Rattus norvegicus (Rat) protein is Maestro heat-like repeat-containing protein family member 7 (Mroh7).